Consider the following 405-residue polypeptide: Zinc finger protein ubi-d4 (405 aa).

4 disordered regions span residues 80 to 147, 165 to 194, 210 to 230, and 248 to 280; these read RKKR…GEFP, DDLD…GGAR, ACDN…VCGK, and AEEE…PDGL. Composition is skewed to basic and acidic residues over residues 100-110 and 126-140; these read PDTDQTLKKEG and DPLE…RMDD. Residues 165–174 show a composition bias toward acidic residues; the sequence is DDLDDEDYEE. The C2H2-type; atypical zinc finger occupies 209–246; that stretch reads YACDNSYKQKHSLKPPDRVCGKRYKNRPGLSYHYAHSH. Over residues 267–277 the composition is skewed to basic and acidic residues; sequence RSEEQKSKKGP. 2 consecutive PHD-type zinc fingers follow at residues 284–344 and 341–391; these read NNYC…CKCC and CKCC…CLDL.

Belongs to the requiem/DPF family.

The protein localises to the cytoplasm. Its subcellular location is the nucleus. May be a transcription factor required for the apoptosis response following survival factor withdrawal from myeloid cells. Might also have a role in the development and maturation of lymphoid cells. In Gallus gallus (Chicken), this protein is Zinc finger protein ubi-d4 (REQ).